An 840-amino-acid chain; its full sequence is Phosphatidylglycerol lysyltransferase (840 aa).

At 1 to 8 (MTQELKSK) the chain is on the cytoplasmic side. Residues 9–29 (LLSFFKFIFATALFIFVIFTL) form a helical membrane-spanning segment. The Extracellular portion of the chain corresponds to 30–52 (YRELSHINFKETFIQFGKINRLW). A helical transmembrane segment spans residues 53–73 (LVLLFAGGGLSLILLSLYDII). Residues 74–89 (LVKALKLKMPLIRVFR) are Cytoplasmic-facing. Residues 90–110 (VSYIINALNSIIGFGGFIGAG) traverse the membrane as a helical segment. Residues 111-129 (VRAFVYKNYTNDTKKLVQY) are Extracellular-facing. Residues 130–150 (ISIILVSMLTGLSLLSILVVL) traverse the membrane as a helical segment. Residues 151 to 161 (RIFNASHMIDE) are Cytoplasmic-facing. Residues 162–182 (ISWVRWILYIVALFLPIFIFY) form a helical membrane-spanning segment. At 183–200 (TVARPVDRNNRYMGVYCT) the chain is on the extracellular side. A helical membrane pass occupies residues 201-221 (VVSCVEWMAAATVLYFAALIV). The Cytoplasmic segment spans residues 222-229 (DIHISFMT). The helical transmembrane segment at 230–250 (FVGIFVIAALSGLVSFIPGGF) threads the bilayer. The Extracellular portion of the chain corresponds to 251-270 (GAFDLVVLLGLKSLGISEEK). Residues 271 to 291 (ILLALVLYRFAYYFVPVMIAL) traverse the membrane as a helical segment. Topologically, residues 292–337 (ILSSFEFGNTAKKYLDNSKYFIPVKDFTSFLRSYQKDILAKVPSFS) are cytoplasmic. A helical membrane pass occupies residues 338–358 (LAILIFLTSIIFFINNLTIVY). Residues 359-366 (DGLYDGNH) lie on the Extracellular side of the membrane. The chain crosses the membrane as a helical span at residues 367–387 (FAYYIALAIQTSACLLLILNV). The Cytoplasmic segment spans residues 388 to 392 (RGIYK). A helical membrane pass occupies residues 393–413 (GSRRAIIYAFISIILIASATI). At 414-415 (YT) the chain is on the extracellular side. The helical transmembrane segment at 416–436 (YASFLLLSWLIIIFVLLILAY) threads the bilayer. Residues 437–450 (QRAQVLKRPLRFKK) lie on the Cytoplasmic side of the membrane. The helical transmembrane segment at 451 to 471 (LAFMLLLSIFILYLNHILISG) threads the bilayer. At 472–489 (TLYALDVYHIEIDTSLLR) the chain is on the extracellular side. The helical transmembrane segment at 490–510 (YYFWMTIVIIMLLVGVIAWLF) threads the bilayer. Residues 511–840 (DYKYKRPHHS…LKVMRVIRHK (330 aa)) lie on the Cytoplasmic side of the membrane.

The protein belongs to the LPG synthase family.

Its subcellular location is the cell membrane. It catalyses the reaction L-lysyl-tRNA(Lys) + a 1,2-diacyl-sn-glycero-3-phospho-(1'-sn-glycerol) = a 1,2-diacyl-sn-glycero-3-phospho-1'-(3'-O-L-lysyl)-sn-glycerol + tRNA(Lys). Catalyzes the transfer of a lysyl group from L-lysyl-tRNA(Lys) to membrane-bound phosphatidylglycerol (PG), which produces lysylphosphatidylglycerol (LPG), a major component of the bacterial membrane with a positive net charge. LPG synthesis contributes to bacterial virulence as it is involved in the resistance mechanism against cationic antimicrobial peptides (CAMP) produces by the host's immune system (defensins, cathelicidins) and by the competing microorganisms (bacteriocins). In fact, the modification of anionic phosphatidylglycerol with positively charged L-lysine results in repulsion of the peptides. In Staphylococcus epidermidis (strain ATCC 35984 / DSM 28319 / BCRC 17069 / CCUG 31568 / BM 3577 / RP62A), this protein is Phosphatidylglycerol lysyltransferase (mprF).